Here is a 335-residue protein sequence, read N- to C-terminus: Acetyl-coenzyme A carboxylase carboxyl transferase subunit alpha (335 aa).

The 261-residue stretch at 48–308 folds into the CoA carboxyltransferase C-terminal domain; the sequence is TLEKKVEALR…KGILIEELSA (261 aa).

This sequence belongs to the AccA family. As to quaternary structure, acetyl-CoA carboxylase is a heterohexamer composed of biotin carboxyl carrier protein (AccB), biotin carboxylase (AccC) and two subunits each of ACCase subunit alpha (AccA) and ACCase subunit beta (AccD).

The protein resides in the cytoplasm. It catalyses the reaction N(6)-carboxybiotinyl-L-lysyl-[protein] + acetyl-CoA = N(6)-biotinyl-L-lysyl-[protein] + malonyl-CoA. It participates in lipid metabolism; malonyl-CoA biosynthesis; malonyl-CoA from acetyl-CoA: step 1/1. Its function is as follows. Component of the acetyl coenzyme A carboxylase (ACC) complex. First, biotin carboxylase catalyzes the carboxylation of biotin on its carrier protein (BCCP) and then the CO(2) group is transferred by the carboxyltransferase to acetyl-CoA to form malonyl-CoA. This chain is Acetyl-coenzyme A carboxylase carboxyl transferase subunit alpha, found in Chlorobium phaeovibrioides (strain DSM 265 / 1930) (Prosthecochloris vibrioformis (strain DSM 265)).